A 413-amino-acid chain; its full sequence is Cardiolipin synthase B (413 aa).

PLD phosphodiesterase domains lie at 108-135 (IFRR…SAEH) and 285-312 (RRRP…DPLS). Active-site residues include His-113, Lys-115, Asp-120, His-290, Lys-292, and Asp-297. The interval 388–413 (AQVPPPAQPEMETQDRVDPENTGVKP) is disordered.

It belongs to the phospholipase D family. Cardiolipin synthase subfamily. ClsB sub-subfamily.

It is found in the cell membrane. It catalyses the reaction 2 a 1,2-diacyl-sn-glycero-3-phospho-(1'-sn-glycerol) = a cardiolipin + glycerol. In terms of biological role, catalyzes the phosphatidyl group transfer from one phosphatidylglycerol molecule to another to form cardiolipin (CL) (diphosphatidylglycerol) and glycerol. This is Cardiolipin synthase B from Salmonella typhimurium (strain LT2 / SGSC1412 / ATCC 700720).